The chain runs to 309 residues: Tagatose-6-phosphate kinase (309 aa).

The protein belongs to the carbohydrate kinase PfkB family. LacC subfamily.

The enzyme catalyses D-tagatofuranose 6-phosphate + ATP = D-tagatofuranose 1,6-bisphosphate + ADP + H(+). It functions in the pathway carbohydrate metabolism; D-tagatose 6-phosphate degradation; D-glyceraldehyde 3-phosphate and glycerone phosphate from D-tagatose 6-phosphate: step 1/2. The sequence is that of Tagatose-6-phosphate kinase from Streptococcus pneumoniae (strain 70585).